Reading from the N-terminus, the 267-residue chain is Meiosis-specific protein ISC10 (267 aa).

A compositionally biased stretch (basic and acidic residues) spans 1 to 13; sequence MDVDERLHQDENQ. A disordered region spans residues 1-26; it reads MDVDERLHQDENQTHPFSQKKSSSFL. The segment covering 14-25 has biased composition (polar residues); the sequence is THPFSQKKSSSF.

Indispensable for spore formation. This chain is Meiosis-specific protein ISC10 (ISC10), found in Saccharomyces cerevisiae (strain ATCC 204508 / S288c) (Baker's yeast).